Reading from the N-terminus, the 146-residue chain is UPF0178 protein CTC_02403 (146 aa).

The protein belongs to the UPF0178 family.

The protein is UPF0178 protein CTC_02403 of Clostridium tetani (strain Massachusetts / E88).